Here is a 167-residue protein sequence, read N- to C-terminus: Transmembrane protein 229B (167 aa).

At 1–14 the chain is on the cytoplasmic side; it reads MAAAEPLTAFSRWY. Residues 15 to 35 traverse the membrane as a helical segment; that stretch reads LYAIHGYFCEVMFTAAWEFVV. Topologically, residues 36–40 are extracellular; that stretch reads NFNWK. The helical transmembrane segment at 41-61 threads the bilayer; it reads FPGVTSVWALFIYGTSILIVE. Over 62–72 the chain is Cytoplasmic; the sequence is KMYLYLKDKCH. The chain crosses the membrane as a helical span at residues 73–93; sequence ILVRCFIYTLWTYLWEFTTGL. At 94–109 the chain is on the extracellular side; it reads ILRQFNACPWDYSQFD. The helical transmembrane segment at 110-130 threads the bilayer; it reads FDFMGLITLEYAIPWFCASFI. Over 131 to 167 the chain is Cytoplasmic; that stretch reads MEQLVIRNTLRLRFDETAEPGAPTVPVALANGHVKTD.

Belongs to the TMEM229 family.

Its subcellular location is the membrane. The sequence is that of Transmembrane protein 229B (TMEM229B) from Gallus gallus (Chicken).